Reading from the N-terminus, the 172-residue chain is Peptide deformylase (172 aa).

Positions 94 and 136 each coordinate Fe cation. Glu-137 is a catalytic residue. Position 140 (His-140) interacts with Fe cation.

The protein belongs to the polypeptide deformylase family. Fe(2+) is required as a cofactor.

The enzyme catalyses N-terminal N-formyl-L-methionyl-[peptide] + H2O = N-terminal L-methionyl-[peptide] + formate. Functionally, removes the formyl group from the N-terminal Met of newly synthesized proteins. Requires at least a dipeptide for an efficient rate of reaction. N-terminal L-methionine is a prerequisite for activity but the enzyme has broad specificity at other positions. This Pelagibacter ubique (strain HTCC1062) protein is Peptide deformylase.